Consider the following 135-residue polypeptide: Large ribosomal subunit protein uL16 (135 aa).

Belongs to the universal ribosomal protein uL16 family. Part of the 50S ribosomal subunit.

Its function is as follows. Binds 23S rRNA and is also seen to make contacts with the A and possibly P site tRNAs. The protein is Large ribosomal subunit protein uL16 of Desulfatibacillum aliphaticivorans.